The sequence spans 415 residues: Serine hydroxymethyltransferase (415 aa).

Residues leucine 119 and 123 to 125 each bind (6S)-5,6,7,8-tetrahydrofolate; that span reads GHL. N6-(pyridoxal phosphate)lysine is present on lysine 228. 353–355 provides a ligand contact to (6S)-5,6,7,8-tetrahydrofolate; that stretch reads SPF.

The protein belongs to the SHMT family. In terms of assembly, homodimer. Requires pyridoxal 5'-phosphate as cofactor.

The protein localises to the cytoplasm. The catalysed reaction is (6R)-5,10-methylene-5,6,7,8-tetrahydrofolate + glycine + H2O = (6S)-5,6,7,8-tetrahydrofolate + L-serine. It functions in the pathway one-carbon metabolism; tetrahydrofolate interconversion. The protein operates within amino-acid biosynthesis; glycine biosynthesis; glycine from L-serine: step 1/1. In terms of biological role, catalyzes the reversible interconversion of serine and glycine with tetrahydrofolate (THF) serving as the one-carbon carrier. Also exhibits THF-independent aldolase activity toward beta-hydroxyamino acids, producing glycine and aldehydes, via a retro-aldol mechanism. The protein is Serine hydroxymethyltransferase of Halorubrum lacusprofundi (strain ATCC 49239 / DSM 5036 / JCM 8891 / ACAM 34).